Reading from the N-terminus, the 302-residue chain is Glutaminase (302 aa).

Substrate is bound by residues S61, N111, E155, N162, Y186, Y238, and V256.

Belongs to the glutaminase family. As to quaternary structure, homotetramer.

The catalysed reaction is L-glutamine + H2O = L-glutamate + NH4(+). In Pseudomonas savastanoi pv. phaseolicola (strain 1448A / Race 6) (Pseudomonas syringae pv. phaseolicola (strain 1448A / Race 6)), this protein is Glutaminase.